A 445-amino-acid polypeptide reads, in one-letter code: GTPase Der (445 aa).

EngA-type G domains follow at residues 3 to 167 (PVIA…YAGQ) and 180 to 353 (IKIA…AAAM). GTP contacts are provided by residues 9-16 (GRPNVGKS), 56-60 (DTGGF), 119-122 (NKAE), 186-193 (GRPNVGKS), 233-237 (DTAGL), and 298-301 (NKWD). Residues 354–438 (SKLPTPKLTR…PLRIEFRSSN (85 aa)) form the KH-like domain.

It belongs to the TRAFAC class TrmE-Era-EngA-EngB-Septin-like GTPase superfamily. EngA (Der) GTPase family. As to quaternary structure, associates with the 50S ribosomal subunit.

Functionally, GTPase that plays an essential role in the late steps of ribosome biogenesis. This chain is GTPase Der, found in Burkholderia cenocepacia (strain ATCC BAA-245 / DSM 16553 / LMG 16656 / NCTC 13227 / J2315 / CF5610) (Burkholderia cepacia (strain J2315)).